Reading from the N-terminus, the 863-residue chain is Glycogen phosphorylase (863 aa).

Residue Lys-618 is modified to N6-(pyridoxal phosphate)lysine.

Belongs to the glycogen phosphorylase family. Pyridoxal 5'-phosphate is required as a cofactor.

The catalysed reaction is [(1-&gt;4)-alpha-D-glucosyl](n) + phosphate = [(1-&gt;4)-alpha-D-glucosyl](n-1) + alpha-D-glucose 1-phosphate. Functionally, phosphorylase is an important allosteric enzyme in carbohydrate metabolism. Enzymes from different sources differ in their regulatory mechanisms and in their natural substrates. However, all known phosphorylases share catalytic and structural properties. The sequence is that of Glycogen phosphorylase (glgP) from Mycobacterium tuberculosis (strain CDC 1551 / Oshkosh).